Reading from the N-terminus, the 561-residue chain is Dihydroxy-acid dehydratase (561 aa).

Cysteine 51 serves as a coordination point for [2Fe-2S] cluster. Aspartate 83 is a binding site for Mg(2+). Cysteine 124 lines the [2Fe-2S] cluster pocket. Positions 125 and 126 each coordinate Mg(2+). Lysine 126 is modified (N6-carboxylysine). [2Fe-2S] cluster is bound at residue cysteine 196. Glutamate 448 provides a ligand contact to Mg(2+). The active-site Proton acceptor is the serine 473.

This sequence belongs to the IlvD/Edd family. In terms of assembly, homodimer. It depends on [2Fe-2S] cluster as a cofactor. The cofactor is Mg(2+).

It catalyses the reaction (2R)-2,3-dihydroxy-3-methylbutanoate = 3-methyl-2-oxobutanoate + H2O. It carries out the reaction (2R,3R)-2,3-dihydroxy-3-methylpentanoate = (S)-3-methyl-2-oxopentanoate + H2O. Its pathway is amino-acid biosynthesis; L-isoleucine biosynthesis; L-isoleucine from 2-oxobutanoate: step 3/4. It functions in the pathway amino-acid biosynthesis; L-valine biosynthesis; L-valine from pyruvate: step 3/4. In terms of biological role, functions in the biosynthesis of branched-chain amino acids. Catalyzes the dehydration of (2R,3R)-2,3-dihydroxy-3-methylpentanoate (2,3-dihydroxy-3-methylvalerate) into 2-oxo-3-methylpentanoate (2-oxo-3-methylvalerate) and of (2R)-2,3-dihydroxy-3-methylbutanoate (2,3-dihydroxyisovalerate) into 2-oxo-3-methylbutanoate (2-oxoisovalerate), the penultimate precursor to L-isoleucine and L-valine, respectively. This chain is Dihydroxy-acid dehydratase, found in Sulfolobus acidocaldarius (strain ATCC 33909 / DSM 639 / JCM 8929 / NBRC 15157 / NCIMB 11770).